A 432-amino-acid polypeptide reads, in one-letter code: Serine hydroxymethyltransferase (432 aa).

Residues L127 and 131–133 contribute to the (6S)-5,6,7,8-tetrahydrofolate site; that span reads GHL. K236 carries the post-translational modification N6-(pyridoxal phosphate)lysine.

It belongs to the SHMT family. Homodimer. Pyridoxal 5'-phosphate serves as cofactor.

The protein resides in the cytoplasm. The catalysed reaction is (6R)-5,10-methylene-5,6,7,8-tetrahydrofolate + glycine + H2O = (6S)-5,6,7,8-tetrahydrofolate + L-serine. Its pathway is one-carbon metabolism; tetrahydrofolate interconversion. It participates in amino-acid biosynthesis; glycine biosynthesis; glycine from L-serine: step 1/1. Catalyzes the reversible interconversion of serine and glycine with tetrahydrofolate (THF) serving as the one-carbon carrier. This reaction serves as the major source of one-carbon groups required for the biosynthesis of purines, thymidylate, methionine, and other important biomolecules. Also exhibits THF-independent aldolase activity toward beta-hydroxyamino acids, producing glycine and aldehydes, via a retro-aldol mechanism. The chain is Serine hydroxymethyltransferase from Rhizobium johnstonii (strain DSM 114642 / LMG 32736 / 3841) (Rhizobium leguminosarum bv. viciae).